Here is a 936-residue protein sequence, read N- to C-terminus: Pre-rRNA-processing protein FHL1 (936 aa).

Disordered regions lie at residues 1-90 (MDGE…NGNL) and 139-169 (DHSREVSSKEDINIEPVNPDEDEREKTQDNT). Polar residues predominate over residues 9-29 (ESSNHVGTSSPTTETQFTIDS). Position 44 is a phosphoserine (Ser-44). A compositionally biased stretch (basic and acidic residues) spans 139–150 (DHSREVSSKEDI). Position 228 is a phosphoserine (Ser-228). 2 positions are modified to phosphothreonine: Thr-230 and Thr-247. Positions 243-257 (PPQNTVTENNSTDAE) are enriched in polar residues. The segment at 243 to 270 (PPQNTVTENNSTDAETTQRKLSEPIDAS) is disordered. Ser-264 bears the Phosphoserine mark. One can recognise an FHA domain in the interval 300-357 (AIIGRRSENDFSHKVDVNLGPSKSISRRHAQIFYNFGTGRFELSIIGKNGAFVDDIFV). Basic and acidic residues predominate over residues 384–395 (EQERNDDSKSPE). Residues 384–442 (EQERNDDSKSPENADIAESEINTRNLKKNEPKSKKKITTGAKPKKAQTKPAVKKEKKPP) are disordered. Residues 416-430 (SKKKITTGAKPKKAQ) show a composition bias toward basic residues. A DNA-binding region (fork-head) is located at residues 460-552 (TKPTVSYSAM…ERQKKKQSEI (93 aa)). The interval 718–936 (AKAQHSKPIR…EVNVSLEEKL (219 aa)) is disordered. Polar residues-rich tracts occupy residues 742–753 (SQLSASASSHPN) and 765–777 (DPSSLSRFFQPRQ). Low complexity-rich tracts occupy residues 779-795 (ARATSSVAATSVPAAAS) and 815-853 (ESGTSSSSSSSSESGSESDSGSDDGSASGSGDNSSTSSE). The segment covering 854-863 (SESESDSGSE) has biased composition (acidic residues). Positions 864–911 (VDEKNNKNEKIDSESIKNNESKDDIPSKDENSSNDNREISKTDEEGHD) are enriched in basic and acidic residues.

It localises to the nucleus. Functionally, acts as a transcriptional regulator that recruits coactivator IFH1 to the promoters of ribosomal protein genes. Recruited to ribosomal gene promoters by RAP1. The sequence is that of Pre-rRNA-processing protein FHL1 (FHL1) from Saccharomyces cerevisiae (strain ATCC 204508 / S288c) (Baker's yeast).